The following is a 199-amino-acid chain: Chromophore lyase CpcT/CpeT 2 (199 aa).

This sequence belongs to the CpcT/CpeT biliprotein lyase family.

In terms of biological role, covalently attaches a chromophore to Cys residue(s) of phycobiliproteins. In Synechococcus sp. (strain JA-3-3Ab) (Cyanobacteria bacterium Yellowstone A-Prime), this protein is Chromophore lyase CpcT/CpeT 2.